We begin with the raw amino-acid sequence, 341 residues long: MSITPQEALQRCIEHRELFHDEMTAMMRLIMSGEMSPELVAGLLIALRTKKETVGEIAAAAQVMREFATSVQVDDRTHLVDVVGTGGDGAHTFNISTAAMFVAAGTGAKIAKHGNRSVSSKSGSADVLEALGVNLALSADQVAKCISTVGTGFMFAPNHHPAMKNVVPIRKQLGVRTIFNILGPLTNPADAKRILMGVFHPDLVGIQARVLQALGMEHALVVYGRGGLDEISLGGPTLVGELKDGVVREYEIHPKDFGLNTAPTNSFKVANAEESKKIVLDVLDGKPGPASDIVCLNAGATLYVAGIAKSIASGIALAKTAITSGAARQKLDTFVVTTQSK.

Residues glycine 84, 87–88, threonine 92, 94–97, 112–120, and serine 124 each bind 5-phospho-alpha-D-ribose 1-diphosphate; these read GD, NIST, and KHGNRSVSS. Residue glycine 84 participates in anthranilate binding. Serine 96 lines the Mg(2+) pocket. Asparagine 115 serves as a coordination point for anthranilate. Arginine 170 lines the anthranilate pocket. Positions 229 and 230 each coordinate Mg(2+).

It belongs to the anthranilate phosphoribosyltransferase family. In terms of assembly, homodimer. Mg(2+) is required as a cofactor.

It catalyses the reaction N-(5-phospho-beta-D-ribosyl)anthranilate + diphosphate = 5-phospho-alpha-D-ribose 1-diphosphate + anthranilate. Its pathway is amino-acid biosynthesis; L-tryptophan biosynthesis; L-tryptophan from chorismate: step 2/5. Functionally, catalyzes the transfer of the phosphoribosyl group of 5-phosphorylribose-1-pyrophosphate (PRPP) to anthranilate to yield N-(5'-phosphoribosyl)-anthranilate (PRA). This is Anthranilate phosphoribosyltransferase from Polynucleobacter necessarius subsp. necessarius (strain STIR1).